The sequence spans 247 residues: UPF0246 protein LAF_1150 (247 aa).

Belongs to the UPF0246 family.

In Limosilactobacillus fermentum (strain NBRC 3956 / LMG 18251) (Lactobacillus fermentum), this protein is UPF0246 protein LAF_1150.